We begin with the raw amino-acid sequence, 288 residues long: MIKLEQICRYVWINGDLIPYQFARIHVLTHSLHYSGSVFEGERAYNGKVFKLKEHTERLIQSAEALGLKVPYSVDEIIKAHEFLITHNNIKDAYIRPLIWCGDESLNITNPALSTNFLIASIPSMPMSCEQGVNLHVSRWRKAMPDSTPVQSKSAAQYNMAITSKKEAKALGYDDALLLDYEGFIAECTTTNIFFVKDTTLYTPIADRFLNGITRKTIIEIAKNLCLEVKEERLKLAQIEYFTGCFVTGTAIEVQNISSIDLGDKKILFEDCKIADLLKKEYLRIVRG.

The residue at position 153 (lysine 153) is an N6-(pyridoxal phosphate)lysine.

This sequence belongs to the class-IV pyridoxal-phosphate-dependent aminotransferase family. Pyridoxal 5'-phosphate serves as cofactor.

The catalysed reaction is L-leucine + 2-oxoglutarate = 4-methyl-2-oxopentanoate + L-glutamate. It catalyses the reaction L-isoleucine + 2-oxoglutarate = (S)-3-methyl-2-oxopentanoate + L-glutamate. It carries out the reaction L-valine + 2-oxoglutarate = 3-methyl-2-oxobutanoate + L-glutamate. The protein operates within amino-acid biosynthesis; L-isoleucine biosynthesis; L-isoleucine from 2-oxobutanoate: step 4/4. It participates in amino-acid biosynthesis; L-leucine biosynthesis; L-leucine from 3-methyl-2-oxobutanoate: step 4/4. Its pathway is amino-acid biosynthesis; L-valine biosynthesis; L-valine from pyruvate: step 4/4. In terms of biological role, acts on leucine, isoleucine and valine. This is Probable branched-chain-amino-acid aminotransferase (ilvE) from Rickettsia typhi (strain ATCC VR-144 / Wilmington).